The chain runs to 150 residues: Small heat shock protein IbpB (150 aa).

Residues Ser-26–Gly-137 enclose the sHSP domain.

The protein belongs to the small heat shock protein (HSP20) family. Homodimer. Forms homomultimers of about 100-150 subunits at optimal growth temperatures. Conformation changes to oligomers at high temperatures or high ionic concentrations. The decrease in size of the multimers is accompanied by an increase in chaperone activity.

Its subcellular location is the cytoplasm. Its function is as follows. Associates with aggregated proteins, together with IbpA, to stabilize and protect them from irreversible denaturation and extensive proteolysis during heat shock and oxidative stress. Aggregated proteins bound to the IbpAB complex are more efficiently refolded and reactivated by the ATP-dependent chaperone systems ClpB and DnaK/DnaJ/GrpE. Its activity is ATP-independent. The polypeptide is Small heat shock protein IbpB (Pectobacterium atrosepticum (strain SCRI 1043 / ATCC BAA-672) (Erwinia carotovora subsp. atroseptica)).